We begin with the raw amino-acid sequence, 331 residues long: PTS-dependent dihydroxyacetone kinase 2, dihydroxyacetone-binding subunit DhaK (331 aa).

The DhaK domain maps to 7–328 (DGYEAVEEML…LDTPCDTPYF (322 aa)). Dihydroxyacetone-binding positions include 55-58 (GSGH) and Asp-111. Catalysis depends on His-58, which acts as the Proton acceptor. The active-site Tele-hemiaminal-histidine intermediate is the His-218.

In terms of assembly, homodimer. The dihydroxyacetone kinase complex is composed of a homodimer of DhaM, a homodimer of DhaK and the subunit DhaL.

It localises to the cytoplasm. It catalyses the reaction dihydroxyacetone + phosphoenolpyruvate = dihydroxyacetone phosphate + pyruvate. The protein operates within polyol metabolism; glycerol degradation. Dihydroxyacetone binding subunit of the dihydroxyacetone kinase, which is responsible for the phosphoenolpyruvate (PEP)-dependent phosphorylation of dihydroxyacetone via a phosphoryl group transfer from DhaL-ATP. The sequence is that of PTS-dependent dihydroxyacetone kinase 2, dihydroxyacetone-binding subunit DhaK from Listeria innocua serovar 6a (strain ATCC BAA-680 / CLIP 11262).